The following is an 838-amino-acid chain: Probable beta-glucosidase I (838 aa).

A glycan (N-linked (GlcNAc...) asparagine) is linked at Asn197. The active site involves Asp225. Positions 395–555 (DGKKGFKFRV…SQEELISKAA (161 aa)) constitute a PA14 domain. Asn493 carries N-linked (GlcNAc...) asparagine glycosylation.

The protein belongs to the glycosyl hydrolase 3 family.

The protein resides in the secreted. The catalysed reaction is Hydrolysis of terminal, non-reducing beta-D-glucosyl residues with release of beta-D-glucose.. Its pathway is glycan metabolism; cellulose degradation. Its function is as follows. Beta-glucosidases are one of a number of cellulolytic enzymes involved in the degradation of cellulosic biomass. Catalyzes the last step releasing glucose from the inhibitory cellobiose. This Aspergillus fumigatus (strain ATCC MYA-4609 / CBS 101355 / FGSC A1100 / Af293) (Neosartorya fumigata) protein is Probable beta-glucosidase I (bglI).